A 156-amino-acid chain; its full sequence is MNVTVTLIGQMVAFGILVWFVNRFLWGPLTNLMEERKKRVADGLAAAERGKHERELAEKRAKETLHEAKEKAAEIITQAQKRAGEIIEEAKEAAQAEGERLKVSANAEIQQEMNRAREDLRGQVVSIAVAGASKILKRELDEKANEALVKELVAQI.

A helical transmembrane segment spans residues 1–21 (MNVTVTLIGQMVAFGILVWFV).

It belongs to the ATPase B chain family. As to quaternary structure, F-type ATPases have 2 components, F(1) - the catalytic core - and F(0) - the membrane proton channel. F(1) has five subunits: alpha(3), beta(3), gamma(1), delta(1), epsilon(1). F(0) has three main subunits: a(1), b(2) and c(10-14). The alpha and beta chains form an alternating ring which encloses part of the gamma chain. F(1) is attached to F(0) by a central stalk formed by the gamma and epsilon chains, while a peripheral stalk is formed by the delta and b chains.

The protein resides in the cell inner membrane. Functionally, f(1)F(0) ATP synthase produces ATP from ADP in the presence of a proton or sodium gradient. F-type ATPases consist of two structural domains, F(1) containing the extramembraneous catalytic core and F(0) containing the membrane proton channel, linked together by a central stalk and a peripheral stalk. During catalysis, ATP synthesis in the catalytic domain of F(1) is coupled via a rotary mechanism of the central stalk subunits to proton translocation. Its function is as follows. Component of the F(0) channel, it forms part of the peripheral stalk, linking F(1) to F(0). The protein is ATP synthase subunit b of Nitrosococcus oceani (strain ATCC 19707 / BCRC 17464 / JCM 30415 / NCIMB 11848 / C-107).